We begin with the raw amino-acid sequence, 635 residues long: 1-deoxy-D-xylulose-5-phosphate synthase (635 aa).

Residues histidine 74 and 115–117 each bind thiamine diphosphate; that span reads AHS. Mg(2+) is bound at residue aspartate 146. Thiamine diphosphate-binding positions include 147-148, asparagine 176, tyrosine 283, and glutamate 365; that span reads GA. Asparagine 176 serves as a coordination point for Mg(2+).

This sequence belongs to the transketolase family. DXPS subfamily. As to quaternary structure, homodimer. It depends on Mg(2+) as a cofactor. Thiamine diphosphate serves as cofactor.

The enzyme catalyses D-glyceraldehyde 3-phosphate + pyruvate + H(+) = 1-deoxy-D-xylulose 5-phosphate + CO2. The protein operates within metabolic intermediate biosynthesis; 1-deoxy-D-xylulose 5-phosphate biosynthesis; 1-deoxy-D-xylulose 5-phosphate from D-glyceraldehyde 3-phosphate and pyruvate: step 1/1. In terms of biological role, catalyzes the acyloin condensation reaction between C atoms 2 and 3 of pyruvate and glyceraldehyde 3-phosphate to yield 1-deoxy-D-xylulose-5-phosphate (DXP). The polypeptide is 1-deoxy-D-xylulose-5-phosphate synthase (Paraburkholderia xenovorans (strain LB400)).